Here is a 325-residue protein sequence, read N- to C-terminus: Lipoyl synthase (325 aa).

[4Fe-4S] cluster-binding residues include Cys-66, Cys-71, Cys-77, Cys-92, Cys-96, Cys-99, and Ser-303. Residues 78–292 enclose the Radical SAM core domain; sequence WEDREATFLI…AQFAEGLGFA (215 aa).

This sequence belongs to the radical SAM superfamily. Lipoyl synthase family. [4Fe-4S] cluster is required as a cofactor.

The protein resides in the cytoplasm. The enzyme catalyses [[Fe-S] cluster scaffold protein carrying a second [4Fe-4S](2+) cluster] + N(6)-octanoyl-L-lysyl-[protein] + 2 oxidized [2Fe-2S]-[ferredoxin] + 2 S-adenosyl-L-methionine + 4 H(+) = [[Fe-S] cluster scaffold protein] + N(6)-[(R)-dihydrolipoyl]-L-lysyl-[protein] + 4 Fe(3+) + 2 hydrogen sulfide + 2 5'-deoxyadenosine + 2 L-methionine + 2 reduced [2Fe-2S]-[ferredoxin]. Its pathway is protein modification; protein lipoylation via endogenous pathway; protein N(6)-(lipoyl)lysine from octanoyl-[acyl-carrier-protein]: step 2/2. In terms of biological role, catalyzes the radical-mediated insertion of two sulfur atoms into the C-6 and C-8 positions of the octanoyl moiety bound to the lipoyl domains of lipoate-dependent enzymes, thereby converting the octanoylated domains into lipoylated derivatives. The sequence is that of Lipoyl synthase from Mycobacterium sp. (strain JLS).